An 86-amino-acid polypeptide reads, in one-letter code: Small ribosomal subunit protein uS17 (86 aa).

The protein belongs to the universal ribosomal protein uS17 family. Part of the 30S ribosomal subunit.

In terms of biological role, one of the primary rRNA binding proteins, it binds specifically to the 5'-end of 16S ribosomal RNA. In Exiguobacterium sp. (strain ATCC BAA-1283 / AT1b), this protein is Small ribosomal subunit protein uS17.